We begin with the raw amino-acid sequence, 352 residues long: Adenosine deaminase (352 aa).

Alanine 2 is subject to N-acetylalanine. Zn(2+) contacts are provided by histidine 15 and histidine 17. 2 residues coordinate substrate: histidine 17 and aspartate 19. At lysine 54 the chain carries N6-acetyllysine. Residue glycine 184 coordinates substrate. Histidine 214 contacts Zn(2+). Catalysis depends on glutamate 217, which acts as the Proton donor. Lysine 232 carries the N6-acetyllysine modification. Aspartate 295 contributes to the Zn(2+) binding site. Aspartate 296 serves as a coordination point for substrate.

This sequence belongs to the metallo-dependent hydrolases superfamily. Adenosine and AMP deaminases family. In terms of assembly, interacts with DPP4 (via extracellular domain). Interacts with PLG (via Kringle 4 domain); the interaction stimulates PLG activation when in complex with DPP4. Requires Zn(2+) as cofactor. Detected in brain and liver (at protein level).

The protein localises to the cell membrane. It is found in the cell junction. The protein resides in the cytoplasmic vesicle lumen. Its subcellular location is the cytoplasm. It localises to the lysosome. The enzyme catalyses adenosine + H2O + H(+) = inosine + NH4(+). It carries out the reaction 2'-deoxyadenosine + H2O + H(+) = 2'-deoxyinosine + NH4(+). It catalyses the reaction cordycepin + H2O + H(+) = 3'-deoxyinosine + NH4(+). Catalyzes the hydrolytic deamination of adenosine and 2-deoxyadenosine. Plays an important role in purine metabolism and in adenosine homeostasis. Modulates signaling by extracellular adenosine, and so contributes indirectly to cellular signaling events. Acts as a positive regulator of T-cell coactivation, by binding DPP4. Its interaction with DPP4 regulates lymphocyte-epithelial cell adhesion. Enhances dendritic cell immunogenicity by affecting dendritic cell costimulatory molecule expression and cytokines and chemokines secretion. Enhances CD4+ T-cell differentiation and proliferation. Acts as a positive modulator of adenosine receptors ADORA1 and ADORA2A, by enhancing their ligand affinity via conformational change. Stimulates plasminogen activation. Plays a role in male fertility. Plays a protective role in early postimplantation embryonic development. Also responsible for the deamination of cordycepin (3'-deoxyadenosine), a fungal natural product that shows antitumor, antibacterial, antifungal, antivirus, and immune regulation properties. The protein is Adenosine deaminase (Ada) of Rattus norvegicus (Rat).